The chain runs to 247 residues: Cell division protein ZapD (247 aa).

It belongs to the ZapD family. Interacts with FtsZ.

Its subcellular location is the cytoplasm. Functionally, cell division factor that enhances FtsZ-ring assembly. Directly interacts with FtsZ and promotes bundling of FtsZ protofilaments, with a reduction in FtsZ GTPase activity. This Citrobacter koseri (strain ATCC BAA-895 / CDC 4225-83 / SGSC4696) protein is Cell division protein ZapD.